Consider the following 231-residue polypeptide: Large ribosomal subunit protein uL1 (231 aa).

Belongs to the universal ribosomal protein uL1 family. In terms of assembly, part of the 50S ribosomal subunit.

Functionally, binds directly to 23S rRNA. The L1 stalk is quite mobile in the ribosome, and is involved in E site tRNA release. Protein L1 is also a translational repressor protein, it controls the translation of the L11 operon by binding to its mRNA. The sequence is that of Large ribosomal subunit protein uL1 from Verminephrobacter eiseniae (strain EF01-2).